Consider the following 156-residue polypeptide: MPRRREVPKRDILPDPKFGNVDVAKFVNVLMLSGKKSVAENIIYGAFEHIQTKSGKDPLEVFTAAILNCKPLVEVKSRRVGGANYQVPVEVRPVRRMALSMRWLREAANKRSEKSMPQRLAGELLEAAESRGGAMKKRDEVHRMAEANKAFSHFRF.

It belongs to the universal ribosomal protein uS7 family. In terms of assembly, part of the 30S ribosomal subunit. Contacts proteins S9 and S11.

In terms of biological role, one of the primary rRNA binding proteins, it binds directly to 16S rRNA where it nucleates assembly of the head domain of the 30S subunit. Is located at the subunit interface close to the decoding center, probably blocks exit of the E-site tRNA. The chain is Small ribosomal subunit protein uS7 from Herminiimonas arsenicoxydans.